A 348-amino-acid polypeptide reads, in one-letter code: NADH-ubiquinone oxidoreductase chain 2 (348 aa).

9 helical membrane passes run valine 13 to leucine 33, phenylalanine 60 to leucine 80, proline 96 to valine 116, proline 124 to tyrosine 144, isoleucine 150 to glycine 170, threonine 200 to leucine 220, leucine 241 to phenylalanine 261, isoleucine 278 to isoleucine 298, and leucine 325 to leucine 345.

This sequence belongs to the complex I subunit 2 family. In terms of assembly, core subunit of respiratory chain NADH dehydrogenase (Complex I) which is composed of 45 different subunits. Interacts with TMEM242.

It is found in the mitochondrion inner membrane. It catalyses the reaction a ubiquinone + NADH + 5 H(+)(in) = a ubiquinol + NAD(+) + 4 H(+)(out). In terms of biological role, core subunit of the mitochondrial membrane respiratory chain NADH dehydrogenase (Complex I) which catalyzes electron transfer from NADH through the respiratory chain, using ubiquinone as an electron acceptor. Essential for the catalytic activity and assembly of complex I. The chain is NADH-ubiquinone oxidoreductase chain 2 from Papio hamadryas (Hamadryas baboon).